Consider the following 357-residue polypeptide: Alanine racemase (357 aa).

K35 functions as the Proton acceptor; specific for D-alanine in the catalytic mechanism. Position 35 is an N6-(pyridoxal phosphate)lysine (K35). Residue R131 participates in substrate binding. Y256 serves as the catalytic Proton acceptor; specific for L-alanine. Residue M304 participates in substrate binding.

Belongs to the alanine racemase family. The cofactor is pyridoxal 5'-phosphate.

The catalysed reaction is L-alanine = D-alanine. It functions in the pathway amino-acid biosynthesis; D-alanine biosynthesis; D-alanine from L-alanine: step 1/1. Catalyzes the interconversion of L-alanine and D-alanine. May also act on other amino acids. This chain is Alanine racemase (alr), found in Legionella pneumophila (strain Paris).